The following is a 226-amino-acid chain: Endonuclease NucS (226 aa).

Belongs to the NucS endonuclease family.

Its subcellular location is the cytoplasm. Cleaves both 3' and 5' ssDNA extremities of branched DNA structures. The chain is Endonuclease NucS from Mycobacterium tuberculosis (strain CDC 1551 / Oshkosh).